Here is a 286-residue protein sequence, read N- to C-terminus: Elongation factor Ts (286 aa).

The interval 82–85 is involved in Mg(2+) ion dislocation from EF-Tu; sequence TDFV.

It belongs to the EF-Ts family.

It localises to the cytoplasm. Its function is as follows. Associates with the EF-Tu.GDP complex and induces the exchange of GDP to GTP. It remains bound to the aminoacyl-tRNA.EF-Tu.GTP complex up to the GTP hydrolysis stage on the ribosome. In Desulfovibrio desulfuricans (strain ATCC 27774 / DSM 6949 / MB), this protein is Elongation factor Ts.